The sequence spans 289 residues: Thiosulfate sulfurtransferase (289 aa).

The Rhodanese 1 domain occupies 24 to 142 (VGAGLRVLDA…WVKEGHPVTA (119 aa)). Residues 143 to 158 (EPSQPAEAVFKAKLDK) form a hinge region. The Rhodanese 2 domain occupies 172–284 (GSKKFQVVDS…WFHRAPPQYK (113 aa)). Arg-186 is a substrate binding site. Catalysis depends on Cys-244, which acts as the Cysteine persulfide intermediate. Position 246 (Lys-246) interacts with substrate.

As to quaternary structure, monomer. Expressed in numerous tissues.

It localises to the mitochondrion matrix. The catalysed reaction is thiosulfate + hydrogen cyanide = thiocyanate + sulfite + 2 H(+). Together with MRPL18, acts as a mitochondrial import factor for the cytosolic 5S rRNA. Only the nascent unfolded cytoplasmic form is able to bind to the 5S rRNA. Formation of iron-sulfur complexes and cyanide detoxification. The polypeptide is Thiosulfate sulfurtransferase (TST) (Gallus gallus (Chicken)).